The following is a 965-amino-acid chain: Valine--tRNA ligase (965 aa).

Residues 1–22 (MENTPSHINKTEPSLDKTYSPQ) form a disordered region. The 'HIGH' region signature appears at 56–66 (PNVTGSLHMGH). The 'KMSKS' region signature appears at 568-572 (KMSKS). Lys571 provides a ligand contact to ATP. Residues 896–965 (LIDKATELDR…IEQQATIAAL (70 aa)) adopt a coiled-coil conformation.

The protein belongs to the class-I aminoacyl-tRNA synthetase family. ValS type 1 subfamily. In terms of assembly, monomer.

It localises to the cytoplasm. It carries out the reaction tRNA(Val) + L-valine + ATP = L-valyl-tRNA(Val) + AMP + diphosphate. Its function is as follows. Catalyzes the attachment of valine to tRNA(Val). As ValRS can inadvertently accommodate and process structurally similar amino acids such as threonine, to avoid such errors, it has a 'posttransfer' editing activity that hydrolyzes mischarged Thr-tRNA(Val) in a tRNA-dependent manner. This Yersinia pseudotuberculosis serotype I (strain IP32953) protein is Valine--tRNA ligase.